The following is a 273-amino-acid chain: Large ribosomal subunit protein uL2 (273 aa).

Positions Ala-224–Thr-263 are disordered. Basic residues predominate over residues Lys-253–Thr-263.

This sequence belongs to the universal ribosomal protein uL2 family. Part of the 50S ribosomal subunit. Forms a bridge to the 30S subunit in the 70S ribosome.

In terms of biological role, one of the primary rRNA binding proteins. Required for association of the 30S and 50S subunits to form the 70S ribosome, for tRNA binding and peptide bond formation. It has been suggested to have peptidyltransferase activity; this is somewhat controversial. Makes several contacts with the 16S rRNA in the 70S ribosome. In Buchnera aphidicola subsp. Schizaphis graminum (strain Sg), this protein is Large ribosomal subunit protein uL2.